We begin with the raw amino-acid sequence, 165 residues long: Probable chemoreceptor glutamine deamidase CheD (165 aa).

The protein belongs to the CheD family.

It carries out the reaction L-glutaminyl-[protein] + H2O = L-glutamyl-[protein] + NH4(+). Its function is as follows. Probably deamidates glutamine residues to glutamate on methyl-accepting chemotaxis receptors (MCPs), playing an important role in chemotaxis. The protein is Probable chemoreceptor glutamine deamidase CheD of Clostridium tetani (strain Massachusetts / E88).